A 373-amino-acid polypeptide reads, in one-letter code: Secondary metabolism regulator laeA (373 aa).

Positions 55–81 (ERDPAAGRWHANGSPSINSTSSKNPDR) are disordered. Polar residues predominate over residues 67 to 77 (GSPSINSTSSK).

Belongs to the methyltransferase superfamily. LaeA methyltransferase family. As to quaternary structure, component of the heterotrimeric velvet complex composed of laeA, veA and velB; VeA acting as a bridging protein between laeA and velB.

It is found in the nucleus. It catalyses the reaction L-methionyl-[protein] + S-adenosyl-L-methionine = S-methyl-L-methionyl-[protein] + S-adenosyl-L-homocysteine. Its function is as follows. Methyltransferase that performs automethylation. No other methyl-accepting substrate has been identified yet. Component of the velvet transcription factor complex that acts as a global regulator for secondary metabolite gene expression. Positively controls expression of 20% to 40% of major classes of secondary metabolite biosynthesis genes such as nonribosomal peptide synthetases, polyketide synthases, and P450 monooxygenases. Controls the expression of the gliotoxin gene cluster. Controls the expression of the fumitremorgin, fumagillin, and pseurotin gene clusters, where genes for fumagillin and pseurotin are physically intertwined in a single supercluster. Regulates the biosynthetic genes required for endocrocin production. Secondary metabolites under the transcriptional regulation of laeA are necessary for inhibition of angiogenesis during invasive infection in mice. Controls the expression of cell surface rodA, a hydrophobin that acts as an antiphagocytic molecule. Also regulates the expression of genes involved in conidial biosynthesis. This Aspergillus fumigatus (strain ATCC MYA-4609 / CBS 101355 / FGSC A1100 / Af293) (Neosartorya fumigata) protein is Secondary metabolism regulator laeA.